Consider the following 592-residue polypeptide: Inactive metallocarboxypeptidase ECM14 (592 aa).

Positions 1 to 21 (MRQFTHGTLLAILALANTISA) are cleaved as a signal peptide. Residues 22–174 (IPSFSANNYP…QTVYESYPSS (153 aa)) constitute a propeptide that is removed on maturation. Over residues 170–179 (SYPSSSQRPT) the composition is skewed to polar residues. Residues 170-191 (SYPSSSQRPTDNGRGFLPSRES) are disordered. One can recognise a Peptidase M14 domain in the interval 202–521 (DYQPLSVIGP…NAVMVLAKFL (320 aa)). The Zn(2+) site is built by H264 and E267. Substrate-binding positions include 264–267 (HARE), R322, and 339–340 (DR). A disulfide bond links C333 and C356. Residue N349 is glycosylated (N-linked (GlcNAc...) asparagine). H396 lines the Zn(2+) pocket. 397-398 (SY) is a binding site for substrate. The disordered stretch occupies residues 542–592 (ADKPILDDGDDDEEEDGQDKKDDSWIPDEYKNDNDHDDDDDGWGLRRRRKR). The segment covering 548–558 (DDGDDDEEEDG) has biased composition (acidic residues). Residues 559–575 (QDKKDDSWIPDEYKNDN) show a composition bias toward basic and acidic residues.

It belongs to the peptidase M14 family. Requires Zn(2+) as cofactor.

It is found in the vacuole. Its subcellular location is the secreted. Its function is as follows. Inactive carboxypeptidase that may play a role in cell wall organization and biogenesis. This chain is Inactive metallocarboxypeptidase ECM14 (ECM14), found in Ajellomyces dermatitidis (strain ER-3 / ATCC MYA-2586) (Blastomyces dermatitidis).